A 299-amino-acid polypeptide reads, in one-letter code: J domain-containing protein CG6693 (299 aa).

The region spanning 15-82 is the J domain; that stretch reads DVYKLMELAR…QKRALYDEQG (68 aa). At S239 the chain carries Phosphoserine. Residues 266–299 form a disordered region; the sequence is FEKKKKKSKKPAAKQETKPKLNGVKAGRVEKGKN. Residues 268–277 are compositionally biased toward basic residues; the sequence is KKKKKSKKPA.

This chain is J domain-containing protein CG6693, found in Drosophila melanogaster (Fruit fly).